The primary structure comprises 139 residues: Large ribosomal subunit protein bL20 (139 aa).

The protein belongs to the bacterial ribosomal protein bL20 family.

Its function is as follows. Binds directly to 23S ribosomal RNA and is necessary for the in vitro assembly process of the 50S ribosomal subunit. It is not involved in the protein synthesizing functions of that subunit. The sequence is that of Large ribosomal subunit protein bL20 from Leuconostoc mesenteroides subsp. mesenteroides (strain ATCC 8293 / DSM 20343 / BCRC 11652 / CCM 1803 / JCM 6124 / NCDO 523 / NBRC 100496 / NCIMB 8023 / NCTC 12954 / NRRL B-1118 / 37Y).